The chain runs to 61 residues: Large ribosomal subunit protein uL30 (61 aa).

This sequence belongs to the universal ribosomal protein uL30 family. In terms of assembly, part of the 50S ribosomal subunit.

The chain is Large ribosomal subunit protein uL30 from Thermosipho melanesiensis (strain DSM 12029 / CIP 104789 / BI429).